The following is a 452-amino-acid chain: Biotin carboxylase (452 aa).

The region spanning 1 to 445 (MFKKVLIANR…TTAFVTNHLK (445 aa)) is the Biotin carboxylation domain. ATP contacts are provided by residues Lys116, Lys158, 164–165 (GG), 200–203 (EKAV), His208, and His235. The region spanning 120–317 (RTAMQTAGVP…LVEWQLLIAA (198 aa)) is the ATP-grasp domain. A hydrogencarbonate-binding site is contributed by Lys237. Positions 275 and 288 each coordinate ATP. Residues Glu275, Glu288, and Asn290 each contribute to the Mg(2+) site. The Mn(2+) site is built by Glu275, Glu288, and Asn290. Hydrogencarbonate is bound by residues Arg292, Val295, and Arg338. Arg292 is an active-site residue. A biotin-binding site is contributed by Arg338.

Acetyl-CoA carboxylase is a heterohexamer of biotin carboxyl carrier protein, biotin carboxylase and the two subunits of carboxyl transferase in a 2:2 complex. It depends on Mg(2+) as a cofactor. Mn(2+) is required as a cofactor.

The catalysed reaction is N(6)-biotinyl-L-lysyl-[protein] + hydrogencarbonate + ATP = N(6)-carboxybiotinyl-L-lysyl-[protein] + ADP + phosphate + H(+). It functions in the pathway lipid metabolism; malonyl-CoA biosynthesis; malonyl-CoA from acetyl-CoA: step 1/1. Functionally, this protein is a component of the acetyl coenzyme A carboxylase complex; first, biotin carboxylase catalyzes the carboxylation of the carrier protein and then the transcarboxylase transfers the carboxyl group to form malonyl-CoA. The protein is Biotin carboxylase (accC) of Halalkalibacterium halodurans (strain ATCC BAA-125 / DSM 18197 / FERM 7344 / JCM 9153 / C-125) (Bacillus halodurans).